The following is a 238-amino-acid chain: Probable transcriptional regulatory protein YeeN (238 aa).

This sequence belongs to the TACO1 family. YeeN subfamily.

It is found in the cytoplasm. This chain is Probable transcriptional regulatory protein YeeN, found in Shigella sonnei (strain Ss046).